The following is a 343-amino-acid chain: GDSL esterase/lipase EXL4 (343 aa).

The first 21 residues, 1–21, serve as a signal peptide directing secretion; it reads MCSKITLVLTLFSSYFISTDA. Asn23 carries N-linked (GlcNAc...) asparagine glycosylation. Ser35 acts as the Nucleophile in catalysis. Catalysis depends on residues Asp318 and His321.

This sequence belongs to the 'GDSL' lipolytic enzyme family. In terms of tissue distribution, flower buds and pollen.

It localises to the secreted. Its subcellular location is the extracellular space. The protein resides in the extracellular matrix. The protein localises to the pollen coat. Its function is as follows. Required for the formation of pollen coats and male fertility. The sequence is that of GDSL esterase/lipase EXL4 (EXL4) from Arabidopsis thaliana (Mouse-ear cress).